The sequence spans 189 residues: Lipid A acyltransferase PagP (189 aa).

Residues 1 to 24 (MLRRFSLFSLGFLGWLLVSGNASA) form the signal peptide. Catalysis depends on residues H61, D104, and S105.

It belongs to the lipid A palmitoyltransferase family. Homodimer.

Its subcellular location is the cell outer membrane. It carries out the reaction a lipid A + a 1,2-diacyl-sn-glycero-3-phosphocholine = a hepta-acyl lipid A + a 2-acyl-sn-glycero-3-phosphocholine. It catalyses the reaction a lipid IVA + a 1,2-diacyl-sn-glycero-3-phosphocholine = a lipid IVB + a 2-acyl-sn-glycero-3-phosphocholine. The enzyme catalyses a lipid IIA + a 1,2-diacyl-sn-glycero-3-phosphocholine = a lipid IIB + a 2-acyl-sn-glycero-3-phosphocholine. Functionally, transfers a fatty acid residue from the sn-1 position of a phospholipid to the N-linked hydroxyfatty acid chain on the proximal unit of lipid A or its precursors. In Klebsiella pneumoniae subsp. pneumoniae (strain ATCC 700721 / MGH 78578), this protein is Lipid A acyltransferase PagP.